The following is a 410-amino-acid chain: Zinc finger protein 322 (410 aa).

C2H2-type zinc fingers lie at residues 81–103 (YRCD…QRIH), 109–131 (YKCS…QRTH), 137–159 (YTCD…QRSH), 165–187 (YLCN…RRTH), 193–215 (FKCL…QRTH), 221–243 (YKCN…KRVH), 249–271 (YKCG…QRVH), and 277–299 (YKCL…QATH). The segment at 303 to 325 (FKCLEYEKSFNCSSDFIVHQRIH) adopts a C2H2-type 9; degenerate zinc-finger fold. Residues 361-383 (YKYSVCDKTFHHSSALLQHQTVH) form a C2H2-type 10; degenerate zinc finger. Ser400 is modified (phosphoserine).

It belongs to the krueppel C2H2-type zinc-finger protein family. Interacts with POU5F1.

It localises to the nucleus. The protein resides in the cytoplasm. Its function is as follows. Transcriptional activator. Important for maintenance of pluripotency in embryonic stem cells. Binds directly to the POU5F1 distal enhancer and the NANOG proximal promoter, and enhances expression of both genes. Can also bind to numerous other gene promoters and regulates expression of many other pluripotency factors, either directly or indirectly. Promotes inhibition of MAPK signaling during embryonic stem cell differentiation. The protein is Zinc finger protein 322 (Znf322) of Mus musculus (Mouse).